Consider the following 316-residue polypeptide: F-box protein At4g09920 (316 aa).

The F-box domain occupies 1 to 47 (MDRIIGLPDEVLVKILSFVPTKVAVSTSILSKRWEFLWMWLTKLKFG).

The polypeptide is F-box protein At4g09920 (Arabidopsis thaliana (Mouse-ear cress)).